The sequence spans 964 residues: E3 ubiquitin-protein ligase TRIM37 (964 aa).

N-acetylmethionine is present on Met-1. The segment at 15–55 (CFICMEKLRDARLCPHCSKLCCFSCIRRWLTEQRAQCPHCR) adopts an RING-type; degenerate zinc-finger fold. The segment at 90 to 132 (NEKDKCENHHEKLSVFCWTCKKCICHQCALWGGMHGGHTFKPL) adopts a B box-type zinc-finger fold. Residues Cys-95, His-98, Cys-117, and His-124 each contribute to the Zn(2+) site. A coiled-coil region spans residues 132–234 (LAEIYEQHVT…VEHQLRSCSK (103 aa)). The 128-residue stretch at 276–403 (YDSATFVLEN…NDTVILRFQV (128 aa)) folds into the MATH domain. The stretch at 419 to 450 (ITQLEAAQTSYIQQINNLKERLTIELSRTQKS) forms a coiled coil. At Ser-454 the chain carries Phosphoserine. Disordered regions lie at residues 477 to 513 (CSDM…HHEL), 530 to 554 (QLDG…IDEE), and 640 to 663 (RPPA…RKQQ). Over residues 503–513 (KIQNEDYHHEL) the composition is skewed to basic and acidic residues. The span at 534-544 (SSSSASSTATS) shows a compositional bias: low complexity. The stretch at 673-700 (KMLKRLKTQMAEVRCMKTDVKNTLSEIK) forms a coiled coil. Residues 752–761 (NSTNKKSNSP) show a composition bias toward polar residues. Disordered stretches follow at residues 752–812 (NSTN…SPRA) and 891–964 (GASA…NSGR). A compositionally biased stretch (basic and acidic residues) spans 776–788 (RAVDPGENSRSKG). Residues 794–807 (SEGSPGSSQSGSRH) are compositionally biased toward low complexity. Positions 904–916 (SDIECDTENEEQE) are enriched in acidic residues. Residues 955-964 (SFNTDENSGR) are compositionally biased toward polar residues.

It belongs to the TRIM/RBCC family. In terms of assembly, associates with the PRC2/EED-EZH2 complex. In terms of processing, auto-ubiquitinated. Ubiquitous. Highly expressed in testis, while it is weakly expressed in other tissues.

Its subcellular location is the chromosome. The protein resides in the cytoplasm. It localises to the perinuclear region. The protein localises to the peroxisome membrane. It carries out the reaction S-ubiquitinyl-[E2 ubiquitin-conjugating enzyme]-L-cysteine + [acceptor protein]-L-lysine = [E2 ubiquitin-conjugating enzyme]-L-cysteine + N(6)-ubiquitinyl-[acceptor protein]-L-lysine.. The protein operates within protein modification; protein ubiquitination. Functionally, E3 ubiquitin-protein ligase required to prevent centriole reduplication. Probably acts by ubiquitinating positive regulators of centriole reduplication. Mediates monoubiquitination of 'Lys-119' of histone H2A (H2AK119Ub), a specific tag for epigenetic transcriptional repression: associates with some Polycomb group (PcG) multiprotein PRC2-like complex and mediates repression of target genes. Also acts as a positive regulator of peroxisome import by mediating monoubiquitination of PEX5 at 'Lys-472': monoubiquitination promotes PEX5 stabilitation by preventing its polyubiquitination and degradation by the proteasome. Has anti-HIV activity. The polypeptide is E3 ubiquitin-protein ligase TRIM37 (Homo sapiens (Human)).